A 494-amino-acid polypeptide reads, in one-letter code: 3-octaprenyl-4-hydroxybenzoate carboxy-lyase (494 aa).

A Mn(2+)-binding site is contributed by Asn172. Prenylated FMN is bound by residues 175–177, 189–191, and 194–195; these read IYR, RWL, and RG. Position 238 (Glu238) interacts with Mn(2+). Asp287 (proton donor) is an active-site residue.

It belongs to the UbiD family. In terms of assembly, homohexamer. It depends on prenylated FMN as a cofactor. Mn(2+) serves as cofactor.

The protein resides in the cell membrane. The catalysed reaction is a 4-hydroxy-3-(all-trans-polyprenyl)benzoate + H(+) = a 2-(all-trans-polyprenyl)phenol + CO2. It functions in the pathway cofactor biosynthesis; ubiquinone biosynthesis. Functionally, catalyzes the decarboxylation of 3-octaprenyl-4-hydroxy benzoate to 2-octaprenylphenol, an intermediate step in ubiquinone biosynthesis. The polypeptide is 3-octaprenyl-4-hydroxybenzoate carboxy-lyase (Citrobacter koseri (strain ATCC BAA-895 / CDC 4225-83 / SGSC4696)).